We begin with the raw amino-acid sequence, 784 residues long: MASVISVLHGQVMQQDDEPPLAKRRRCREITFAGKSFYLDVPANRQTQLLTKAIGRLGGIIESFLSRDVDYVVTGSKKAVASVSSVATRRGEKSQIQAAERKEPIHCSRGKQLLKKVVHSQECNSVLTNARSWGVTVLYVEDVVSYIERLERPPSRGIQNKTAEGRAADSTRPSLKIARLRSPFIKIEDQSRKFRPLQCTFTSFPELSFVCSDKSPFETVQTVKKKDPGDQEEEEGQRSQKPQARKRKGYCECCEETFDTLSEHLVGEHHFRFVSNPLSYKMIDDLAAQLTCDLMELPFGSPTSPEAERSSQNEDWDLDLAPGEAEPAGNEGHELGILKATRLDKDGHADCEDQGAPAYLRDGGAEEPDQRCGEIPLANIEVDVYNVCSFDQPVVTCTMELPDVSAEGKIHSNLLGSTVGDERVLQRTNGTCEPHIDLALGNGRELKHAELQKDPLTKDSQPELLSTAHEQLPTSAPCMLLEGASVVHFPSHGGTVGSQGDVTSHSAANKPHTENCPVDSTGDRHAQPAGSDALAMSCVIPTLDNGGRHVDATMQSHWEVPLGCTTDTLLSYSTTVTVGELGPEAHNPTPEQQPLLISTCSSITTVCCTDTEFKSCTVSVHSTSHSPPNQNVKSNQTPSLLEMDLANPNCHRAKRKHWDSLLSPPGKKPTSPSHCQSLTLPMWLLCQFPNYGQQVQLPVWADLCKWDGTAAAEEGTVDCSSSSTLPKLHQDSFSSESDWDAHLPSFFQNNPQQSLQCGDLRTAQVTLNESWYGKQLCNILTHDP.

Residues 27–117 (CREITFAGKS…SRGKQLLKKV (91 aa)) enclose the BRCT domain. A disordered region spans residues 222–243 (TVKKKDPGDQEEEEGQRSQKPQ). A DBF4-type zinc finger spans residues 244-293 (ARKRKGYCECCEETFDTLSEHLVGEHHFRFVSNPLSYKMIDDLAAQLTCD). Zn(2+)-binding residues include Cys-251, Cys-254, His-264, and His-270. Disordered stretches follow at residues 299–332 (FGSP…GNEG), 348–368 (HADC…AEEP), and 495–529 (TVGS…AQPA). Residues 498-507 (SQGDVTSHSA) are compositionally biased toward polar residues.

In terms of assembly, forms a complex with cdc7. Phosphorylated. Stably phosphorylated throughout the cell cycle.

Its subcellular location is the nucleus. Regulatory subunit for cdc7 which activates its kinase activity thereby playing a central role in DNA replication and cell proliferation. Specifically required during the initiation of DNA replication in egg and during early embryonic development. The complex cdc7-dbf4b phosphorylates mcm2 and mcm4 subunits and is required for cdc45 loading. This Xenopus laevis (African clawed frog) protein is Protein DBF4 homolog B (dbf4b).